The following is an 85-amino-acid chain: Large ribosomal subunit protein bL27 (85 aa).

The tract at residues 1 to 22 (MAHKKAGGSTNNGRDSESKRLG) is disordered.

This sequence belongs to the bacterial ribosomal protein bL27 family.

This Photobacterium profundum (strain SS9) protein is Large ribosomal subunit protein bL27.